The chain runs to 1714 residues: Bifunctional glutamate/proline--tRNA ligase (1714 aa).

Positions 166–191 (DAKVKRSPQSSKEQTPAKTGERKQEG) are disordered. Residues 170 to 754 (KRSPQSSKEQ…ASELDSQISQ (585 aa)) form a glutamate--tRNA ligase region. Residues 172–182 (SPQSSKEQTPA) are compositionally biased toward polar residues. Positions 209–220 (PPEASGYLHIGH) match the 'HIGH' region motif. The 'KMSKS' region signature appears at 438–442 (VLSKR). 3 disordered regions span residues 718 to 754 (PTSG…QISQ), 791 to 817 (GKDW…ANDA), and 943 to 962 (GTTA…EKNP). 2 stretches are compositionally biased toward low complexity: residues 734-746 (KASS…GQAS) and 800-817 (SASS…ANDA). WHEP-TRS domains lie at 744–800 (QASE…GQTS), 816–872 (DAVS…GTVP), 890–946 (SVAQ…GTTA), 969–1025 (TVNT…GTVA), and 1044–1100 (DVGS…DAKS). The interval 755 to 1201 (QGDLVRDLKS…KPAKPVKKEP (447 aa)) is 6 X 57 AA approximate repeats. Disordered stretches follow at residues 1093–1119 (DWTP…SPAK) and 1168–1210 (FPVA…GAVK). Residues 1094 to 1109 (WTPDAKSEPAVVKKEA) show a composition bias toward basic and acidic residues. Serine 1110 carries the post-translational modification Phosphoserine. The WHEP-TRS 6 domain maps to 1118-1174 (AKDELTQEINAQGEKVRAAKGNKAAKEVIDAEVAKLLALKAKYKEVTGTDFPVAGRG). The segment covering 1172–1181 (GRGGGGGGGS) has biased composition (gly residues). Residues 1207–1714 (GAVKKQTRLG…KFYTLFGRSY (508 aa)) form a proline--tRNA ligase region. Residues 1322-1324 (TSE) and arginine 1353 contribute to the L-proline site. Positions 1353, 1355, 1364, 1365, 1438, and 1441 each coordinate ATP. Mg(2+) is bound at residue glutamine 1438. L-proline is bound at residue histidine 1443. ATP-binding residues include threonine 1476 and arginine 1478. 3 residues coordinate Zn(2+): cysteine 1648, cysteine 1653, and cysteine 1695.

It in the N-terminal section; belongs to the class-I aminoacyl-tRNA synthetase family. Glutamate--tRNA ligase type 2 subfamily. In the C-terminal section; belongs to the class-II aminoacyl-tRNA synthetase family. Component of the multisynthetase complex which is comprised of a bifunctional glutamyl-prolyl-tRNA synthetase, the monospecific isoleucyl, leucyl, glutaminyl, methionyl, lysyl, arginyl, and aspartyl-tRNA synthetases as well as three auxiliary proteins, p18, p48 and p43.

The enzyme catalyses tRNA(Glu) + L-glutamate + ATP = L-glutamyl-tRNA(Glu) + AMP + diphosphate. It catalyses the reaction tRNA(Pro) + L-proline + ATP = L-prolyl-tRNA(Pro) + AMP + diphosphate. Its function is as follows. Catalyzes the attachment of both L-glutamate and L-proline to their cognate tRNAs in a two-step reaction where the amino acid is first activated by ATP to form a covalent intermediate with AMP. Subsequently, the activated amino acid is transferred to the acceptor end of the cognate tRNA to form L-glutamyl-tRNA(Glu) and L-prolyl-tRNA(Pro). This Drosophila melanogaster (Fruit fly) protein is Bifunctional glutamate/proline--tRNA ligase.